The chain runs to 384 residues: L-lactate dehydrogenase (384 aa).

The region spanning 1–380 (MIISSSNDYR…NESCLVEMNK (380 aa)) is the FMN hydroxy acid dehydrogenase domain. Tyr-24 is a substrate binding site. FMN contacts are provided by Ser-106 and Gln-127. A substrate-binding site is contributed by Tyr-129. Thr-155 provides a ligand contact to FMN. Residue Arg-164 participates in substrate binding. Lys-251 is an FMN binding site. His-275 functions as the Proton acceptor in the catalytic mechanism. Arg-278 contributes to the substrate binding site. An FMN-binding site is contributed by 306–330 (DSGIRNGLDVVRMLALGADSVMLGR).

It belongs to the FMN-dependent alpha-hydroxy acid dehydrogenase family. FMN is required as a cofactor.

The protein resides in the cell inner membrane. It catalyses the reaction (S)-lactate + A = pyruvate + AH2. Functionally, catalyzes the conversion of L-lactate to pyruvate. Is coupled to the respiratory chain. This Acinetobacter baylyi (strain ATCC 33305 / BD413 / ADP1) protein is L-lactate dehydrogenase.